The chain runs to 267 residues: 2-keto-3-deoxy-L-rhamnonate aldolase (267 aa).

The active-site Proton acceptor is the His49. Residue Gln151 participates in substrate binding. Residue Glu153 coordinates Mg(2+). Substrate contacts are provided by Ala178 and Asp179. A Mg(2+)-binding site is contributed by Asp179.

Belongs to the HpcH/HpaI aldolase family. KDR aldolase subfamily. Homohexamer. The cofactor is Mg(2+).

The catalysed reaction is 2-dehydro-3-deoxy-L-rhamnonate = (S)-lactaldehyde + pyruvate. Its function is as follows. Catalyzes the reversible retro-aldol cleavage of 2-keto-3-deoxy-L-rhamnonate (KDR) to pyruvate and lactaldehyde. The chain is 2-keto-3-deoxy-L-rhamnonate aldolase from Shigella dysenteriae serotype 1 (strain Sd197).